The following is a 351-amino-acid chain: Actin maturation protease (351 aa).

Residues 1-19 show a composition bias toward pro residues; that stretch reads MTSPCSPPLKPPISPPKTP. The tract at residues 1–70 is disordered; it reads MTSPCSPPLK…PPAATGPAPR (70 aa). A compositionally biased stretch (low complexity) spans 36–50; it reads LDFSALPSPPWSQQT. Over residues 51–64 the composition is skewed to pro residues; it reads PVPPPLPLPPPPAA. The segment at 124-244 is peptidase C39-like; sequence SLIQEGPQCG…WAVSAGVLLG (121 aa). The active site involves Cys132. Ser316 is subject to Phosphoserine.

The protein belongs to the ACTMAP family. As to quaternary structure, interacts (via N-terminus) with PFN2 isoforms IIa and IIb; the interactions may facilitate efficient cleavage of the acetylated N-terminus of immature actin. Interacts with PFN1.

The protein localises to the cytoplasm. The enzyme catalyses N-terminal N(alpha)-acetyl-L-methionyl-L-aspartyl-[protein] + H2O = N-terminal L-aspartyl-[protein] + N-acetyl-L-methionine. The catalysed reaction is N-terminal N(alpha)-acetyl-L-methionyl-L-glutamyl-[protein] + H2O = N-terminal L-glutamyl-[protein] + N-acetyl-L-methionine. It catalyses the reaction N-terminal N(alpha)-acetyl-L-cysteinyl-L-aspartyl-[protein] + H2O = N-terminal L-aspartyl-[protein] + N-acetyl-L-cysteine. It carries out the reaction N-terminal N(alpha)-acetyl-L-cysteinyl-L-glutamyl-[protein] + H2O = N-terminal L-glutamyl-[protein] + N-acetyl-L-cysteine. Actin maturation protease that specifically mediates the cleavage of immature acetylated N-terminal actin, thereby contributing to actin maturation. Cleaves N-terminal acetylated methionine of immature cytoplasmic beta- and gamma-actins ACTB and ACTG1 after translation. Cleaves N-terminal acetylated cysteine of muscle alpha-actins ACTA1, ACTC1 and ACTA2 after canonical removal of N-terminal methionine. The polypeptide is Actin maturation protease (Homo sapiens (Human)).